Here is a 576-residue protein sequence, read N- to C-terminus: Ferroportin (576 aa).

Residues 1-23 (MPKAGEQARQGGCCGSLANYLTS) are Cytoplasmic-facing. The helical transmembrane segment at 24-53 (AKFLLYLGHSLSTWGDRMWHFAVSVFLVEL) threads the bilayer. Fe cation is bound by residues Asp39 and His43. Residues 54–57 (YGNS) are Extracellular-facing. A helical membrane pass occupies residues 58 to 84 (LLLTAVYGLVVAGSVLVLGAIIGDWVD). At 85–87 (KNA) the chain is on the cytoplasmic side. The helical transmembrane segment at 88 to 118 (RLKVAQTSLVVQNVSVILCGIILMMVFLHKN) threads the bilayer. Over 119 to 126 (ELLTMYHG) the chain is Extracellular. Residues 127–162 (WVLTFCYILIITIADVANLASTATAITIQRDWIVVV) traverse the membrane as a helical segment. Over 163–164 (AG) the chain is Cytoplasmic. The helical transmembrane segment at 165-195 (GDRSKLADMNATIRRIDQLTNILAPMAVGQI) threads the bilayer. At 196 to 202 (MTFGSAV) the chain is on the extracellular side. A helical membrane pass occupies residues 203 to 229 (IGCGFISGWNLVSMCVEYFLLWKVYQK). Residues 230–306 (TPALAVKAAL…DGWVSYYNQS (77 aa)) lie on the Cytoplasmic side of the membrane. A helical transmembrane segment spans residues 307–333 (VFLAGMGLAFLYMTVLGFDCITTGYAY). Cys326 serves as a coordination point for Fe cation. Residues 334-338 (TQGLS) are Extracellular-facing. A helical membrane pass occupies residues 339–366 (GSILSILMGASAITGIMGTVAFTWLRRK). Residues 367–368 (CG) are Cytoplasmic-facing. The chain crosses the membrane as a helical span at residues 369–391 (LVRTGLISGFAQLSCLILCVISV). The Extracellular segment spans residues 392-458 (FMPGSPLDLS…ETTPKSVPII (67 aa)). The N-linked (GlcNAc...) asparagine glycan is linked to Asn439. A helical membrane pass occupies residues 459-488 (SVSLLFAGVIAARIGLWSFDLTVTQLLQEN). Over 489–493 (VIESE) the chain is Cytoplasmic. A helical membrane pass occupies residues 494 to 518 (RGIINGVQNSMNYLLDLLHFIMVIL). His512 lines the Fe cation pocket. Over 519–521 (APN) the chain is Extracellular. The helical transmembrane segment at 522 to 547 (PEAFGLLVLISVSFVAMGHIMYFRFA) threads the bilayer. At 548-576 (QKTLGSKLFACGADDEEVTNENQANTSVV) the chain is on the cytoplasmic side.

This sequence belongs to the ferroportin (FP) (TC 2.A.100) family. SLC40A subfamily. In terms of assembly, identified in a complex with STOM. Interacts with HAMP; affinity of the peptide hormone HAMP for SLC40A1 increases by 80-fold in the presence of iron and the interaction promotes SLC40A1 ubiquitination and degradation. Part of a complex composed of SLC40A1/ferroportin, TF/transferrin and HEPH/hephaestin that transfers iron from cells to transferrin. In terms of processing, polyubiquitinated by RNF217; leading to proteasomal degradation. Under conditions of high systemic iron levels, both the hormone peptide hepcidin/HAMP and holo(iron bound)-transferrin/TF induce the ubiquitination, internalization and proteasomal degradation of SLC40A1 to control iron release from cells.

Its subcellular location is the cell membrane. The protein localises to the basolateral cell membrane. It catalyses the reaction Fe(2+)(in) = Fe(2+)(out). Its activity is regulated as follows. During elevated serum iron levels, liver-derived hepcidin/HAMP negatively regulates cell surface ferroportin/SLC40A1 by inducing its ubiquitination, internalization, and degradation. Indeed, hepcidin/HAMP affinity towards ferroportin/SLC40A1 increases by 80-fold in the presence of iron. In terms of biological role, transports Fe(2+) from the inside of a cell to the outside of the cell, playing a key role for maintaining systemic iron homeostasis. Transports iron from intestinal, splenic, hepatic cells, macrophages and erythrocytes into the blood to provide iron to other tissues. Controls therefore dietary iron uptake, iron recycling by macrophages and erythrocytes, and release of iron stores in hepatocytes. When iron is in excess in serum, circulating HAMP/hepcidin levels increase resulting in a degradation of SLC40A1, thus limiting the iron efflux to plasma. The protein is Ferroportin of Canis lupus familiaris (Dog).